The primary structure comprises 589 residues: Oligo-1,6-glucosidase IMA3 (589 aa).

Catalysis depends on D215, which acts as the Nucleophile. E277 serves as the catalytic Proton donor.

This sequence belongs to the glycosyl hydrolase 13 family.

Its subcellular location is the cytoplasm. The enzyme catalyses Hydrolysis of (1-&gt;6)-alpha-D-glucosidic linkages in some oligosaccharides produced from starch and glycogen by alpha-amylase, and in isomaltose.. In terms of biological role, alpha-glucosidase with broad substrate specificity for alpha-1,4- and alpha-1,6-glucosides. Not required for isomaltose utilization, but overexpression allows the IMA1 null mutant to grow on isomaltose. The sequence is that of Oligo-1,6-glucosidase IMA3 (IMA3) from Saccharomyces cerevisiae (strain ATCC 204508 / S288c) (Baker's yeast).